Here is a 485-residue protein sequence, read N- to C-terminus: E3 ubiquitin-protein ligase TRIM58 (485 aa).

The segment at 15 to 59 (CSVCLDFLQEPISVDCGHSFCLRCISEFCEKSDSAQGVYACPQCR) adopts an RING-type zinc-finger fold. The B box-type zinc-finger motif lies at 90–131 (AGSRQCARHGEDLSHFCEEDQTMLCWVCDTSPEHRSHRTETL). 4 residues coordinate Zn(2+): C95, H98, C117, and H123. A coiled-coil region spans residues 192-241 (LAQEEQLQLRRLEEEERATLQRLRDSRNRLAQQNKALKELAEELEERSQR). A B30.2/SPRY domain is found at 271–466 (DLKTVCRIPG…LPPMTEAAPG (196 aa)).

The protein belongs to the TRIM/RBCC family. Expressed in erythroblasts.

It catalyses the reaction S-ubiquitinyl-[E2 ubiquitin-conjugating enzyme]-L-cysteine + [acceptor protein]-L-lysine = [E2 ubiquitin-conjugating enzyme]-L-cysteine + N(6)-ubiquitinyl-[acceptor protein]-L-lysine.. The protein operates within protein modification; protein ubiquitination. In terms of biological role, E3 ubiquitin ligase induced during late erythropoiesis. Directly binds and ubiquitinates the intermediate chain of the microtubule motor dynein (DYNC1LI1/DYNC1LI2), stimulating the degradation of the dynein holoprotein complex. May participate in the erythroblast enucleation process through regulation of nuclear polarization. In Mus musculus (Mouse), this protein is E3 ubiquitin-protein ligase TRIM58 (Trim58).